We begin with the raw amino-acid sequence, 476 residues long: Ubiquinone biosynthesis monooxygenase COQ6, mitochondrial (476 aa).

The transit peptide at 1-35 (MAARIGSMAGLLCVRWWSSAQLAARGGPLVASQRW) directs the protein to the mitochondrion. K219 carries the post-translational modification N6-succinyllysine.

This sequence belongs to the UbiH/COQ6 family. In terms of assembly, component of a multi-subunit COQ enzyme complex, composed of at least COQ3, COQ4, COQ5, COQ6, COQ7 and COQ9. Interacts with COQ8B and COQ7. Requires FAD as cofactor. As to expression, expressed in the kidney, in podocytes.

It localises to the mitochondrion inner membrane. The protein localises to the golgi apparatus. Its subcellular location is the cell projection. It catalyses the reaction 4-hydroxy-3-(all-trans-decaprenyl)benzoate + 2 reduced [2Fe-2S]-[ferredoxin] + O2 + 2 H(+) = 3,4-dihydroxy-5-(all-trans-decaprenyl)benzoate + 2 oxidized [2Fe-2S]-[ferredoxin] + H2O. It carries out the reaction 2-methoxy-6-(all-trans-decaprenyl)phenol + 2 reduced [2Fe-2S]-[ferredoxin] + O2 + 2 H(+) = 2-methoxy-6-(all-trans-decaprenyl)benzene-1,4-diol + 2 oxidized [2Fe-2S]-[ferredoxin] + H2O. Its pathway is cofactor biosynthesis; ubiquinone biosynthesis. FAD-dependent monooxygenase required for two non-consecutive steps during ubiquinone biosynthesis. Required for the C5-ring hydroxylation during ubiquinone biosynthesis by catalyzing the hydroxylation of 4-hydroxy-3-(all-trans-decaprenyl)benzoic acid to 3,4-dihydroxy-5-(all-trans-decaprenyl)benzoic acid. Also acts downstream of COQ4, for the C1-hydroxylation during ubiquinone biosynthesis by catalyzing the hydroxylation of 2-methoxy-6-(all-trans-decaprenyl)phenol to 2-methoxy-6-(all-trans-decaprenyl)benzene-1,4-diol. The electrons required for the hydroxylation reaction are funneled indirectly to COQ6 from NADPH via a ferredoxin/ferredoxin reductase system composed of FDX2 and FDXR. This chain is Ubiquinone biosynthesis monooxygenase COQ6, mitochondrial, found in Mus musculus (Mouse).